Consider the following 329-residue polypeptide: NADH-quinone oxidoreductase subunit H (329 aa).

The next 8 membrane-spanning stretches (helical) occupy residues 9–29 (ILKV…LTYV), 79–99 (IAPV…PFFP), 117–137 (VGIL…LLAG), 162–182 (VSGL…LIEI), 188–208 (GGIF…FLIA), 243–263 (FFIG…LLFF), 269–289 (LWFI…LFLF), and 309–329 (WKVL…VLIL).

It belongs to the complex I subunit 1 family. In terms of assembly, NDH-1 is composed of 14 different subunits. Subunits NuoA, H, J, K, L, M, N constitute the membrane sector of the complex.

The protein resides in the cell inner membrane. It catalyses the reaction a quinone + NADH + 5 H(+)(in) = a quinol + NAD(+) + 4 H(+)(out). Its function is as follows. NDH-1 shuttles electrons from NADH, via FMN and iron-sulfur (Fe-S) centers, to quinones in the respiratory chain. The immediate electron acceptor for the enzyme in this species is believed to be ubiquinone. Couples the redox reaction to proton translocation (for every two electrons transferred, four hydrogen ions are translocated across the cytoplasmic membrane), and thus conserves the redox energy in a proton gradient. This subunit may bind ubiquinone. The sequence is that of NADH-quinone oxidoreductase subunit H from Wolinella succinogenes (strain ATCC 29543 / DSM 1740 / CCUG 13145 / JCM 31913 / LMG 7466 / NCTC 11488 / FDC 602W) (Vibrio succinogenes).